Here is a 254-residue protein sequence, read N- to C-terminus: MTKLEVCCYSVDCAQIAEKAGADRVELCCGQSEGGLTPSVGALMQARETVTIPVHPIVRPRGGDFCYSSNDFTIMKNDIARIRDLGFAGVVVGVLDTDGHIDMPRMREIMSVSGSLAVTFHRAFDMCQNPMIALKQLAELNVARILTSGQQQNAELGLALLKDLVAATKDQGPIIMAGAGVRLTNMQKFIDAGIRELHSSAGRTVPSTMRYRKAGVTMCADSDVDEFSHYCVDGEVVEAMKSLLVMGSPLAKHT.

The protein belongs to the CutC family.

The protein resides in the cytoplasm. This Yersinia pseudotuberculosis serotype I (strain IP32953) protein is PF03932 family protein CutC.